Consider the following 87-residue polypeptide: Omega-lycotoxin-Am1g (87 aa).

The signal sequence occupies residues 1–17 (MKLSIFFVLFFIAIAYC). A propeptide spanning residues 18-40 (QPEFLDDEEDEVEETLPVAEEGR) is cleaved from the precursor. Disulfide bonds link Cys44–Cys59, Cys51–Cys64, Cys58–Cys84, and Cys66–Cys82.

The protein belongs to the neurotoxin omega-lctx family. Expressed by the venom gland.

Its subcellular location is the secreted. Functionally, modulates Cav2.1/CACNA1A voltage-gated calcium channels (P/Q-type currents) in rat cerebellar Purkinje cells and hippocampal CA1-CA3 neurons. At saturating concentrations (&gt;10 nM) decelerates activation kinetics and slightly increases peak amplitude without affecting deactivation kinetics. In vivo, does not cause death when intravenously injected into mice. In rat models, through its activity on Cav2.1/CACNA1A, has an ameliorative effect on memory defects provoked by hyperstimulation of N-methyl-D-aspartate receptors (NMDARs) in the hippocampus. This chain is Omega-lycotoxin-Am1g, found in Alopecosa marikovskyi (Wolf spider).